A 5255-amino-acid chain; its full sequence is SCO-spondin (5255 aa).

The N-terminal stretch at 1–18 (MGIVATVLLWVVTEAARG) is a signal peptide. The 93-residue stretch at 19–111 (RWCERTEQVT…ACCAGWSGPH (93 aa)) folds into the EMI domain. N-linked (GlcNAc...) asparagine glycosylation is found at N97, N136, N156, and N255. A VWFD 1 domain is found at 192-358 (ASCTVWAGSR…PDANPELSCS (167 aa)). Intrachain disulfides connect C194/C317 and C216/C357. In terms of domain architecture, TIL 1 spans 453 to 508 (CGHGQRYSDCVSSCPASCMAAGTAEEGHCRDDCASGCECTPGLLLDRGACIPQSAC). Residues 508 to 601 (CPCLHRGHIY…CGGHQPLSCL (94 aa)) enclose the VWFC 1 domain. The region spanning 546–717 (AECAVLGDLH…NKYRVSTDCP (172 aa)) is the VWFD 2 domain. Cystine bridges form between C548–C681, C570–C716, and C592–C600. N801 carries an N-linked (GlcNAc...) asparagine glycan. The region spanning 809 to 868 (CRGGQVYQECSSPCGRTCADLRLDGASSCPSLDNICVSGCNCPEGPVLDDGGQCVPPGVC) is the TIL 2 domain. Residues 868 to 926 (CPCQHSSQLYPAGSKIRQGCNACMCTAGTWSCTDAPCPDAAFCPGDLVYVFGSCLRTCD) form the VWFC 2 domain. Residues N931 and N972 are each glycosylated (N-linked (GlcNAc...) asparagine). In terms of domain architecture, VWFD 3 spans 998–1168 (GTCVATGDPH…NSWRVSLLCP (171 aa)). 3 disulfides stabilise this stretch: C1000-C1132, C1022-C1167, and C1043-C1050. In terms of domain architecture, TIL 3 spans 1263 to 1319 (CDGGQEYSACGPPCPQTCRNLGLELPEHCDTMSCLEGCFCPEGKVLHEGSCIDPAEC). N-linked (GlcNAc...) asparagine glycosylation occurs at N1340. 6 LDL-receptor class A domains span residues 1362-1398 (HCPD…EVCA), 1400-1436 (HCAP…RGCP), 1439-1477 (PCAP…AGCS), 1479-1515 (SCSV…RGCV), 1515-1551 (VCPA…AFCP), and 1555-1593 (TCAP…VRCM). Cystine bridges form between C1363/C1376, C1370/C1389, C1383/C1397, C1401/C1413, C1408/C1426, C1420/C1435, C1440/C1452, C1447/C1465, C1459/C1476, C1480/C1492, C1487/C1505, C1499/C1514, C1516/C1528, C1523/C1541, C1535/C1550, C1556/C1568, C1563/C1581, and C1575/C1592. N1610 carries N-linked (GlcNAc...) asparagine glycosylation. 3 consecutive LDL-receptor class A domains span residues 1616–1652 (VCGP…LGCN), 1654–1693 (SCVL…DNCG), and 1699–1734 (PCPG…LACE). 3 cysteine pairs are disulfide-bonded: C1617/C1629, C1624/C1642, and C1636/C1651. N-linked (GlcNAc...) asparagine glycosylation is present at N1652. 6 disulfides stabilise this stretch: C1655/C1668, C1662/C1681, C1675/C1692, C1700/C1711, C1706/C1724, and C1718/C1733. An N-linked (GlcNAc...) asparagine glycan is attached at N1713. The N-linked (GlcNAc...) asparagine glycan is linked to N1743. The 43-residue stretch at 1748-1790 (PCAEYSCRDGDCITFKQVCNGLPDCRDGDMASGWLPSDEWDCG) folds into the LDL-receptor class A 10 domain. 6 disulfides stabilise this stretch: C1749-C1759, C1754-C1772, C1766-C1789, C1801-C1837, C1805-C1842, and C1816-C1827. TSP type-1 domains follow at residues 1789-1843 (CGQW…TACP) and 1845-1903 (DGAW…DGCP). N1856 carries an N-linked (GlcNAc...) asparagine glycan. Cystine bridges form between C1857–C1897, C1861–C1902, and C1871–C1881. Positions 1907–1961 (CPGGLQPRPCAPCPASCADLASRAPCRREQCTPGCWCAEGLVLDGERGCVRPREC) constitute a TIL 4 domain. EGF-like domains follow at residues 1919 to 1956 (CPAS…RGCV) and 1957 to 1983 (RPRE…CRLC). One can recognise a VWFC 3 domain in the interval 1961–2019 (CRCEVDGLRYWPGQRMKLNCRLCTCLDGQPRRCRHNPACSVSCSWSAWSPWGECLGPCG). In terms of domain architecture, TSP type-1 3 spans 2002–2058 (SCSWSAWSPWGECLGPCGVQSIQWSFRSPSHPGKHGTNRQCRGIYRKARRCQTEPCQ). Cystine bridges form between C2003–C2042, C2014–C2018, and C2052–C2057. The region spanning 2058 to 2120 (QECEHQGRSR…GKGDSCCFCA (63 aa)) is the VWFC 4 domain. N-linked (GlcNAc...) asparagine glycosylation is found at N2125 and N2230. 4 cysteine pairs are disulfide-bonded: C2162–C2310, C2328–C2339, C2335–C2352, and C2346–C2361. An F5/8 type C domain is found at 2162 to 2310 (CYSPLGIASL…IFLRAELLGC (149 aa)). Residues 2327–2362 (PCGTGEFWCGVSCVTASRRCDGATDCPGGADEAGCE) enclose the LDL-receptor class A 11 domain. The interval 2352–2373 (CPGGADEAGCEPPSSTTLPTHP) is disordered. The segment covering 2364–2373 (PSSTTLPTHP) has biased composition (polar residues). LDL-receptor class A domains are found at residues 2481–2517 (LCPP…AHCG) and 2538–2574 (TCSP…SSCA). Disulfide bonds link C2482/C2494, C2489/C2507, C2501/C2516, C2539/C2551, C2546/C2564, C2558/C2573, C2576/C2612, C2587/C2591, C2622/C2627, C2642/C2679, C2646/C2684, and C2657/C2669. 2 TSP type-1 domains span residues 2575-2628 (DCIL…RACP) and 2630-2685 (PGAW…QPCG). One can recognise a TIL 5 domain in the interval 2708-2750 (PPCPQVCGDLSATSSCQSPCQEGCRCPPGLFLQEGTCVNASQC). An N-linked (GlcNAc...) asparagine glycan is attached at N2746. TSP type-1 domains are found at residues 2790 to 2844 (ACAW…TPCA), 2849 to 2903 (SSGW…APCP), and 2905 to 2958 (AGVW…RPCG). 9 cysteine pairs are disulfide-bonded: C2791/C2829, C2802/C2806, C2839/C2843, C2861/C2897, C2865/C2902, C2881/C2887, C2917/C2952, C2921/C2957, and C2932/C2942. The region spanning 2971–3020 (EECRHSEGRCPWICQDLGAGVACTAQCQPGCHCPAGLLLQNGTCVPPSHC) is the TIL 6 domain. Residues N3011, N3042, and N3065 are each glycosylated (N-linked (GlcNAc...) asparagine). Residues 3020 to 3077 (CLCHHRGHLYQPGDINALDTCNNCTCVTGQMVCSTETCPVPCTWSNWTAWSTCSHSCD) form the VWFC 5 domain. TSP type-1 domains lie at 3060–3115 (PCTW…QPCR) and 3117–3158 (VAPW…APCP). 3 cysteine pairs are disulfide-bonded: C3061–C3099, C3072–C3076, and C3109–C3114. N3136 is a glycosylation site (N-linked (GlcNAc...) asparagine). In terms of domain architecture, TIL 7 spans 3165 to 3217 (CPPGKQWQACAQGAASCAELSAAPPADGSCHPGCYCPPGALLLNNECVAEAAC). One can recognise a VWFC 6 domain in the interval 3217 to 3275 (CPCAVDGVLYQPGDVVPQGCHNCSCIAGRVTNCSQEDCGDVDGPWTPWTPWSECSASCG). N-linked (GlcNAc...) asparagine glycans are attached at residues N3238 and N3248. One can recognise a TSP type-1 11 domain in the interval 3258–3309 (DGPWTPWTPWSECSASCGPGRQRRYRFCSAHPGVPCAEPQPQERPCARQPCH). Disulfide bonds link C3270-C3303, C3274-C3308, and C3285-C3293. N-linked (GlcNAc...) asparagine glycosylation is found at N3350, N3366, and N3392. TSP type-1 domains follow at residues 3410–3475 (PGAW…PPCP) and 3477–3532 (DGAW…SSCP). 6 disulfides stabilise this stretch: C3422/C3468, C3426/C3474, C3437/C3449, C3489/C3524, C3492/C3531, and C3502/C3514. Residues 3534–3589 (CAGGLVAFTCGKPCPHSCEDLREDTACMATPRCLPACACPHGQLLQDGDCVPPELC) enclose the TIL 8 domain. N-linked (GlcNAc...) asparagine glycans are attached at residues N3598 and N3625. 2 consecutive TSP type-1 domains span residues 3644–3700 (DGGW…EGCP) and 3702–3751 (EEPW…HVCR). 6 disulfide bridges follow: C3656–C3693, C3660–C3699, C3671–C3683, C3714–C3745, C3718–C3750, and C3729–C3735. N-linked (GlcNAc...) asparagine glycosylation is found at N3823 and N3869. TSP type-1 domains lie at 3878 to 3934 (DGGF…PECP), 3951 to 4004 (EEGF…PLCS), 4018 to 4074 (NCSW…QACK), and 4076 to 4131 (DGAW…QPCD). 6 disulfide bridges follow: C3890/C3928, C3894/C3933, C3906/C3918, C3963/C3998, C3967/C4003, and C3982/C3988. Residues 3932–3951 (ECPAVPTTEPGPGVAGAEEE) are disordered. An N-linked (GlcNAc...) asparagine glycan is attached at N4018. 6 disulfide bridges follow: C4019–C4055, C4030–C4034, C4068–C4073, C4088–C4125, C4092–C4130, and C4103–C4115. The region spanning 4134–4189 (CPPGMALVTCANHCPRHCGDLQEGIVCREEEHCEPGCRCPNGTLEQDGGCVPLAHC) is the TIL 9 domain. N4174 and N4211 each carry an N-linked (GlcNAc...) asparagine glycan. TSP type-1 domains are found at residues 4230-4282 (RCPW…GPCP), 4322-4384 (GAEH…RPCP), and 4386-4433 (ECSW…SGCS). 3 disulfides stabilise this stretch: C4231-C4266, C4242-C4246, and C4276-C4281. N4362 carries an N-linked (GlcNAc...) asparagine glycan. 3 disulfide bridges follow: C4387-C4417, C4398-C4400, and C4427-C4432. N-linked (GlcNAc...) asparagine glycosylation is present at N4428. One can recognise a TIL 10 domain in the interval 4437–4492 (CEPPFEFQPCSPPCARLCSTLQHPELCPAQSHCLPGCFCPQGLLEQRSACVPPEQC). A glycan (N-linked (GlcNAc...) asparagine) is linked at N4498. TSP type-1 domains follow at residues 4537–4608 (LPLS…DICQ) and 4610–4662 (LCLW…AVCP). 6 disulfide bridges follow: C4548-C4601, C4551-C4607, C4575-C4591, C4611-C4646, C4622-C4626, and C4656-C4661. Residues 4675–4722 (TTCANSCPRACADLWQHVECVQGGCKPGCRCPQGQLLQDGLCVPTAQC) form the TIL 11 domain. N-linked (GlcNAc...) asparagine glycosylation is found at N4730, N4747, and N4752. 2 TSP type-1 domains span residues 4762-4815 (CPSY…QPCP) and 4817-4869 (GCQL…HNCT). Cystine bridges form between C4774/C4809, C4778/C4814, C4789/C4798, C4818/C4852, C4829/C4833, and C4863/C4868. N4867 carries N-linked (GlcNAc...) asparagine glycosylation. The TIL 12 domain maps to 4872 to 4926 (CPRSQVHRECANACPHACADLRPQTQCLPQPCQPGCACPPGQVLQDGACVPPEEC). Residues N4939 and N4970 are each glycosylated (N-linked (GlcNAc...) asparagine). One can recognise a TSP type-1 27 domain in the interval 4979–5033 (DCLWSPWSPWSPCSVTCGMGERLSHRHPLRQRLYEGAECLGPPVRRAACHLPDCA). Intrachain disulfides connect C4980/C5017, C4991/C4995, and C5027/C5032. N-linked (GlcNAc...) asparagine glycans are attached at residues N5081, N5122, and N5169. The 59-residue stretch at 5092-5150 (CECLHQGQLHQPGSEWQEQCARCRCVDGKANCTDGCTPLSCPEGEVKVREPGRCCPVCR) folds into the VWFC 7 domain. 4 disulfides stabilise this stretch: C5161–C5209, C5175–C5226, C5185–C5242, and C5189–C5244. In terms of domain architecture, CTCK spans 5161-5248 (CRRFTELRNI…IHSCECSSCQ (88 aa)).

It belongs to the thrombospondin family.

The protein resides in the secreted. It is found in the extracellular space. Involved in the modulation of neuronal aggregation. May be involved in developmental events during the formation of the central nervous system. The chain is SCO-spondin (SSPO) from Gallus gallus (Chicken).